The following is a 261-amino-acid chain: Imidazole glycerol phosphate synthase subunit HisF (261 aa).

Active-site residues include D12 and D131.

It belongs to the HisA/HisF family. As to quaternary structure, heterodimer of HisH and HisF.

The protein localises to the cytoplasm. It catalyses the reaction 5-[(5-phospho-1-deoxy-D-ribulos-1-ylimino)methylamino]-1-(5-phospho-beta-D-ribosyl)imidazole-4-carboxamide + L-glutamine = D-erythro-1-(imidazol-4-yl)glycerol 3-phosphate + 5-amino-1-(5-phospho-beta-D-ribosyl)imidazole-4-carboxamide + L-glutamate + H(+). The protein operates within amino-acid biosynthesis; L-histidine biosynthesis; L-histidine from 5-phospho-alpha-D-ribose 1-diphosphate: step 5/9. Functionally, IGPS catalyzes the conversion of PRFAR and glutamine to IGP, AICAR and glutamate. The HisF subunit catalyzes the cyclization activity that produces IGP and AICAR from PRFAR using the ammonia provided by the HisH subunit. This is Imidazole glycerol phosphate synthase subunit HisF from Brucella abortus (strain S19).